A 419-amino-acid polypeptide reads, in one-letter code: S-adenosylmethionine synthase (419 aa).

Residue His15 coordinates ATP. Asp17 provides a ligand contact to Mg(2+). Glu43 provides a ligand contact to K(+). L-methionine-binding residues include Glu56 and Gln100. The segment at 100–110 (QSPDIAQGVDE) is flexible loop. ATP-binding positions include 171 to 173 (DGK), 248 to 249 (KF), Asp257, 263 to 264 (RK), Ala280, and Lys284. Asp257 contacts L-methionine. Lys288 contributes to the L-methionine binding site.

This sequence belongs to the AdoMet synthase family. Homotetramer; dimer of dimers. Requires Mg(2+) as cofactor. It depends on K(+) as a cofactor.

The protein resides in the cytoplasm. The enzyme catalyses L-methionine + ATP + H2O = S-adenosyl-L-methionine + phosphate + diphosphate. The protein operates within amino-acid biosynthesis; S-adenosyl-L-methionine biosynthesis; S-adenosyl-L-methionine from L-methionine: step 1/1. In terms of biological role, catalyzes the formation of S-adenosylmethionine (AdoMet) from methionine and ATP. The overall synthetic reaction is composed of two sequential steps, AdoMet formation and the subsequent tripolyphosphate hydrolysis which occurs prior to release of AdoMet from the enzyme. The protein is S-adenosylmethionine synthase of Synechococcus sp. (strain WH7803).